The chain runs to 151 residues: Ribosome maturation factor RimP (151 aa).

The protein belongs to the RimP family.

It is found in the cytoplasm. Functionally, required for maturation of 30S ribosomal subunits. The polypeptide is Ribosome maturation factor RimP (Alcanivorax borkumensis (strain ATCC 700651 / DSM 11573 / NCIMB 13689 / SK2)).